The primary structure comprises 316 residues: MTSKNPIQKALYLTFERAQWSELRDSVPLTLSERDLENLRGINEKVSLSEVTDIYLPLSRLLNLIVKSKQQRGLVLDEFLGQKPFHSPYIISIAGSVAVGKSTTARVLQALLQHWPEHPKVDLVTTDGFLYPLADLKRKGLLQRKGFPESYDMKMLVEFISAVKSGQPHTKAPIYSHVTYDRVRNQHQIVSQPDILILEGLNVLQTGLDSPVDTRRPFVSDFVDFSIYVDAEESLLKQWYQERFLQFRKGAFSDAKSYFHHYANLTDDEANAIAANIWDTINGPNLQLNIQPTRERAHLILQKGQDHLMSHVLMRK.

Position 95–102 (95–102 (GSVAVGKS)) interacts with ATP.

This sequence belongs to the prokaryotic pantothenate kinase family.

The protein localises to the cytoplasm. It catalyses the reaction (R)-pantothenate + ATP = (R)-4'-phosphopantothenate + ADP + H(+). It participates in cofactor biosynthesis; coenzyme A biosynthesis; CoA from (R)-pantothenate: step 1/5. The polypeptide is Pantothenate kinase (Shewanella putrefaciens (strain CN-32 / ATCC BAA-453)).